The sequence spans 307 residues: Protease HtpX homolog (307 aa).

Residues 16-36 traverse the membrane as a helical segment; it reads LFMGVGYLIGGAAGAMIALVV. Residue His-130 participates in Zn(2+) binding. Glu-131 is a catalytic residue. Position 134 (His-134) interacts with Zn(2+). Transmembrane regions (helical) follow at residues 145–165 and 172–192; these read ITAT…FFGG and GPGI…AMLV. Glu-201 is a Zn(2+) binding site. The segment at 278-307 is disordered; the sequence is AGQSGSATPDPAPAPRGPWNGGAPRRGPWG.

It belongs to the peptidase M48B family. Zn(2+) is required as a cofactor.

Its subcellular location is the cell inner membrane. This chain is Protease HtpX homolog, found in Nitrobacter hamburgensis (strain DSM 10229 / NCIMB 13809 / X14).